The following is a 562-amino-acid chain: Putative transport protein NT01EI_2530 (562 aa).

6 helical membrane passes run 8–28, 32–52, 66–86, 94–114, 118–138, and 158–178; these read LLTG…LCLG, LGSI…LLGQ, FMLF…SIFF, MLAL…GKLF, IGLT…LVGA, and HLSL…IFGA. RCK C-terminal domains follow at residues 202-288 and 290-373; these read LDND…SFRN and KEVF…RIGF. The next 5 helical transmembrane spans lie at 383–403, 406–426, 443–463, 477–497, and 541–561; these read LLAF…TFQF, FSFG…LGFL, MVKE…AGAG, IAGL…GAFV, and IANV…PGVV.

The protein belongs to the AAE transporter (TC 2.A.81) family. YbjL subfamily.

The protein resides in the cell membrane. The protein is Putative transport protein NT01EI_2530 of Edwardsiella ictaluri (strain 93-146).